The sequence spans 119 residues: Early E3 13.3 kDa protein (119 aa).

The sequence is that of Early E3 13.3 kDa protein from Canine adenovirus serotype 1 (strain Utrecht) (CAdV-1).